The following is a 195-amino-acid chain: Imidazoleglycerol-phosphate dehydratase (195 aa).

This sequence belongs to the imidazoleglycerol-phosphate dehydratase family.

The protein localises to the cytoplasm. The enzyme catalyses D-erythro-1-(imidazol-4-yl)glycerol 3-phosphate = 3-(imidazol-4-yl)-2-oxopropyl phosphate + H2O. Its pathway is amino-acid biosynthesis; L-histidine biosynthesis; L-histidine from 5-phospho-alpha-D-ribose 1-diphosphate: step 6/9. This is Imidazoleglycerol-phosphate dehydratase from Polynucleobacter asymbioticus (strain DSM 18221 / CIP 109841 / QLW-P1DMWA-1) (Polynucleobacter necessarius subsp. asymbioticus).